The chain runs to 495 residues: Telomere-binding protein subunit alpha (495 aa).

Residues 1–13 (MSTAAKQNRSTSR) show a composition bias toward polar residues. The interval 1 to 31 (MSTAAKQNRSTSRVSKKKTAAPKEGAAKKSD) is disordered.

It belongs to the telombin family. Heterodimer of an alpha and a beta subunit.

It localises to the nucleus. It is found in the chromosome. Its subcellular location is the telomere. Its function is as follows. May function as protective capping of the single-stranded telomeric overhang. May also participate in telomere length regulation during DNA replication. Binds specifically to the T4G4-containing extension on the 3'strand and protects this region of the telomere from nuclease digestion and chemical modification. The chain is Telomere-binding protein subunit alpha (MAC-56A) from Sterkiella nova (Ciliate).